A 925-amino-acid polypeptide reads, in one-letter code: Calpain-B (925 aa).

The Calpain catalytic domain maps to 259–558 (MFEDPDFPAT…FDRVEICNLS (300 aa)). Active-site residues include Cys314, His470, and Asn498. The segment at 559–728 (PDSLTEDQQH…TRNNMEENDD (170 aa)) is domain III. The interval 723–753 (MEENDDEVGFGETDDRIAPSLPPPTPKEEDD) is disordered. The tract at residues 729–748 (EVGFGETDDRIAPSLPPPTP) is linker. The tract at residues 749–925 (KEEDDPQRIA…DDWLERTIYS (177 aa)) is domain IV. 2 consecutive EF-hand domains span residues 796-831 (FSKDAVRSMVAMLDKDRSGRLGFEEFEALLTDIAKW) and 826-861 (TDIAKWRAVFKLYDTRRTGSIDGFHLRGALNSAGYH). Asp809, Asp811, Ser813, Arg815, Glu820, Asp839, Thr843, Ser845, and His850 together coordinate Ca(2+).

It belongs to the peptidase C2 family. In terms of processing, undergoes calcium-dependent autolytic cleavage between Asn-74 and Ala-75 and between Gln-224 and Asn-225 to produce two major products, calpain B catalytic subunit 1 and calpain B catalytic subunit 2. This autolysis is necessary for activation of the protein. In terms of tissue distribution, strongly expressed in follicular and border cells of the oocyte. Ubiquitously expressed in early embryos. Localized to the trachea and their orifices, and to the larynx of late embryos. Restricted to the salivary gland in third instar larvae.

It localises to the cytoplasm. It is found in the membrane. Activated by millimolar concentrations of calcium. In terms of biological role, calcium-regulated non-lysosomal thiol-protease. This is Calpain-B from Drosophila melanogaster (Fruit fly).